The primary structure comprises 591 residues: Probable Xaa-Pro aminopeptidase PEPP (591 aa).

The interval 31 to 59 is disordered; sequence SIHSPPPSVSAATHGGVKNPSFSQRRTSG. The Mn(2+) site is built by D322 and D333. Over residues 441–450 the composition is skewed to low complexity; it reads GLSRQAISGS. The interval 441-460 is disordered; sequence GLSRQAISGSRRLPPPRNMK. Mn(2+)-binding residues include E511 and E552.

Belongs to the peptidase M24B family. Mn(2+) is required as a cofactor.

The catalysed reaction is Release of any N-terminal amino acid, including proline, that is linked to proline, even from a dipeptide or tripeptide.. Functionally, catalyzes the removal of a penultimate prolyl residue from the N-termini of peptides. In Sordaria macrospora (strain ATCC MYA-333 / DSM 997 / K(L3346) / K-hell), this protein is Probable Xaa-Pro aminopeptidase PEPP (PEPP).